The primary structure comprises 145 residues: Phosphoribosyl-AMP cyclohydrolase (145 aa).

Asp87 serves as a coordination point for Mg(2+). Residue Cys88 coordinates Zn(2+). 2 residues coordinate Mg(2+): Asp89 and Asp91. Zn(2+)-binding residues include Cys104 and Cys111.

It belongs to the PRA-CH family. In terms of assembly, homodimer. The cofactor is Mg(2+). Requires Zn(2+) as cofactor.

The protein resides in the cytoplasm. It catalyses the reaction 1-(5-phospho-beta-D-ribosyl)-5'-AMP + H2O = 1-(5-phospho-beta-D-ribosyl)-5-[(5-phospho-beta-D-ribosylamino)methylideneamino]imidazole-4-carboxamide. Its pathway is amino-acid biosynthesis; L-histidine biosynthesis; L-histidine from 5-phospho-alpha-D-ribose 1-diphosphate: step 3/9. Functionally, catalyzes the hydrolysis of the adenine ring of phosphoribosyl-AMP. This Nitrobacter winogradskyi (strain ATCC 25391 / DSM 10237 / CIP 104748 / NCIMB 11846 / Nb-255) protein is Phosphoribosyl-AMP cyclohydrolase.